The following is a 150-amino-acid chain: MITQKMKYALKALLELADEARRDSPQALTIEEIATRSGTPKRFLEHILLDLRKAGVVASIRGRSGGYSLLKAPRDVSISELVRRIDGPIAPLPCLSRSAYQPCDDCHDEAACRIRKVFAEVFWSYLVLIDSLTLEDMLAAGNPAAKLLED.

The 139-residue stretch at 1 to 139 folds into the HTH rrf2-type domain; sequence MITQKMKYAL…DSLTLEDMLA (139 aa).

In Rhodobacter capsulatus (strain ATCC BAA-309 / NBRC 16581 / SB1003), this protein is Putative HTH-type transcriptional regulator rrf2-like.